The following is a 147-amino-acid chain: MIRRRKKVRKLRGSHTHGWGCKKKHRGGGSKGGRGMAGTGKRNKSKWTWTIKYAPDHLGKRGFSRPPEVQREVRVVNLKFIDEHLDELMQMGIAYEEGGKIIVDVTQFADKVLGTGKLTRPLVIKARAFSPKAEEKIKAAGGEAVLV.

Basic residues predominate over residues 1-28 (MIRRRKKVRKLRGSHTHGWGCKKKHRGG). Residues 1–43 (MIRRRKKVRKLRGSHTHGWGCKKKHRGGGSKGGRGMAGTGKRN) are disordered. The span at 29–38 (GSKGGRGMAG) shows a compositional bias: gly residues.

This sequence belongs to the universal ribosomal protein uL15 family. As to quaternary structure, part of the 50S ribosomal subunit.

In terms of biological role, binds to the 23S rRNA. This Pyrococcus furiosus (strain ATCC 43587 / DSM 3638 / JCM 8422 / Vc1) protein is Large ribosomal subunit protein uL15.